We begin with the raw amino-acid sequence, 130 residues long: UPF0212 protein PF1486 (130 aa).

It belongs to the UPF0212 family.

In Pyrococcus furiosus (strain ATCC 43587 / DSM 3638 / JCM 8422 / Vc1), this protein is UPF0212 protein PF1486.